The chain runs to 473 residues: MGIAKQSCDCCRVRRVKCDRNKPCNRCIQRNLNCTYLQPLKKRGPKSIRAGSLKKIAEVQMVSMNNNIMAAPVVCKKVPKNLIDQCLRLRLYHDNLYVIWPMLSYDDLHKLLEEKYDDRCAYWFLVSLSAATLSDLQIEIEYEEGVTFTGEQLCTLCMLSRQFFDDLSNSDIFRIMTYYCLHRCYAQFADTRTSYRLSCEAVGLIIKIAGFHREETYEFLPFGEQQLRRKVYYLLLMTERFYAVYIKCVTSLDATIAPPLPEVVTDPRLSLESFLEVIRVFTIPGKCFYDALATNCVDDSCTEDSLKRIRNELHTTSLDIEPWSYGYIDFLFSRHWVRTLAWKLVLHMKGMRMNFLSNTNNTHIPVEIARDMLGDTFLTPKNLYDVHGPGIPMKALEIANALVDVVNKYDHNMKLEAWNVLYDVSKFVFSLKHCNNKMFDRFSTKCQGALITLPISKPLQLNDNSKDEDDIIP.

The zn(2)-C6 fungal-type DNA-binding region spans 8–34 (CDCCRVRRVKCDRNKPCNRCIQRNLNC). The Nuclear localization signal signature appears at 41–49 (KKRGPKSIR).

The protein belongs to the MAL13 family.

Its subcellular location is the nucleus. In terms of biological role, regulates the coordinate transcription of structural MAL6S (maltase) and MAL6T (maltose permease) genes. The sequence is that of Maltose fermentation regulatory protein MAL63 (MAL63) from Saccharomyces cerevisiae (Baker's yeast).